We begin with the raw amino-acid sequence, 255 residues long: Ribonuclease HII (255 aa).

One can recognise an RNase H type-2 domain in the interval 72-255 (RLIAGVDEAG…KTFAPVQSYC (184 aa)). Residues aspartate 78, glutamate 79, and aspartate 170 each contribute to the a divalent metal cation site.

Belongs to the RNase HII family. The cofactor is Mn(2+). Mg(2+) is required as a cofactor.

It is found in the cytoplasm. The enzyme catalyses Endonucleolytic cleavage to 5'-phosphomonoester.. Functionally, endonuclease that specifically degrades the RNA of RNA-DNA hybrids. The polypeptide is Ribonuclease HII (Bacillus velezensis (strain DSM 23117 / BGSC 10A6 / LMG 26770 / FZB42) (Bacillus amyloliquefaciens subsp. plantarum)).